We begin with the raw amino-acid sequence, 483 residues long: 3-isopropylmalate dehydratase large subunit (483 aa).

[4Fe-4S] cluster is bound by residues C352, C412, and C415.

Belongs to the aconitase/IPM isomerase family. LeuC type 1 subfamily. As to quaternary structure, heterodimer of LeuC and LeuD. Requires [4Fe-4S] cluster as cofactor.

It carries out the reaction (2R,3S)-3-isopropylmalate = (2S)-2-isopropylmalate. It functions in the pathway amino-acid biosynthesis; L-leucine biosynthesis; L-leucine from 3-methyl-2-oxobutanoate: step 2/4. Functionally, catalyzes the isomerization between 2-isopropylmalate and 3-isopropylmalate, via the formation of 2-isopropylmaleate. In Paenarthrobacter aurescens (strain TC1), this protein is 3-isopropylmalate dehydratase large subunit.